The following is a 60-amino-acid chain: Toxin 5 (60 aa).

4 cysteine pairs are disulfide-bonded: Cys-3-Cys-22, Cys-17-Cys-39, Cys-41-Cys-52, and Cys-53-Cys-58.

It belongs to the three-finger toxin family. Short-chain subfamily. Type I alpha-neurotoxin sub-subfamily. In terms of tissue distribution, expressed by the venom gland.

The protein localises to the secreted. Binds to muscle nicotinic acetylcholine receptor (nAChR) and inhibit acetylcholine from binding to the receptor, thereby impairing neuromuscular transmission. The chain is Toxin 5 from Hydrophis schistosus (Beaked sea snake).